Reading from the N-terminus, the 580-residue chain is Arginine--tRNA ligase (580 aa).

Residues 127-137 carry the 'HIGH' region motif; it reads PNLAKEMHVGH.

This sequence belongs to the class-I aminoacyl-tRNA synthetase family. As to quaternary structure, monomer.

It localises to the cytoplasm. The catalysed reaction is tRNA(Arg) + L-arginine + ATP = L-arginyl-tRNA(Arg) + AMP + diphosphate. The chain is Arginine--tRNA ligase from Idiomarina loihiensis (strain ATCC BAA-735 / DSM 15497 / L2-TR).